We begin with the raw amino-acid sequence, 347 residues long: Ribosomal RNA large subunit methyltransferase M (347 aa).

S-adenosyl-L-methionine-binding positions include serine 184, 217-220 (APGG), aspartate 236, aspartate 256, and aspartate 272. Lysine 301 serves as the catalytic Proton acceptor.

The protein belongs to the class I-like SAM-binding methyltransferase superfamily. RNA methyltransferase RlmE family. RlmM subfamily. As to quaternary structure, monomer.

It localises to the cytoplasm. It carries out the reaction cytidine(2498) in 23S rRNA + S-adenosyl-L-methionine = 2'-O-methylcytidine(2498) in 23S rRNA + S-adenosyl-L-homocysteine + H(+). Functionally, catalyzes the 2'-O-methylation at nucleotide C2498 in 23S rRNA. The polypeptide is Ribosomal RNA large subunit methyltransferase M (Xanthomonas oryzae pv. oryzae (strain KACC10331 / KXO85)).